Reading from the N-terminus, the 75-residue chain is MPITSKYTDEQVEKILAEVALVLEKHAASPELTLMIAGNIATNVLNQRVAASQRKLIAEKFAQALMSSLETPKTH.

The protein belongs to the UPF0352 family.

The protein is UPF0352 protein VP2129 of Vibrio parahaemolyticus serotype O3:K6 (strain RIMD 2210633).